Reading from the N-terminus, the 212-residue chain is Endoplasmic reticulum vesicle protein 25 (212 aa).

An N-terminal signal peptide occupies residues Met1–Ala21. The Lumenal portion of the chain corresponds to Val22–Arg181. Residues Gln34–Ser122 form the GOLD domain. Residues Asn182–Met202 traverse the membrane as a helical segment. Residues Lys203–Ile212 lie on the Cytoplasmic side of the membrane.

The protein belongs to the EMP24/GP25L family.

The protein localises to the endoplasmic reticulum membrane. The protein resides in the golgi apparatus membrane. In terms of biological role, constituent of COPII-coated endoplasmic reticulum-derived transport vesicles. Required for efficient transport of a subset of secretory proteins to the Golgi. Facilitates retrograde transport from the Golgi to the endoplasmic reticulum. The chain is Endoplasmic reticulum vesicle protein 25 (ERV25) from Kluyveromyces lactis (strain ATCC 8585 / CBS 2359 / DSM 70799 / NBRC 1267 / NRRL Y-1140 / WM37) (Yeast).